A 189-amino-acid polypeptide reads, in one-letter code: Chitin synthase 2 (189 aa).

Belongs to the chitin synthase family. Class II subfamily.

Its subcellular location is the cell membrane. The enzyme catalyses [(1-&gt;4)-N-acetyl-beta-D-glucosaminyl](n) + UDP-N-acetyl-alpha-D-glucosamine = [(1-&gt;4)-N-acetyl-beta-D-glucosaminyl](n+1) + UDP + H(+). Its function is as follows. Polymerizes chitin, a structural polymer of the cell wall and septum, by transferring the sugar moiety of UDP-GlcNAc to the non-reducing end of the growing chitin polymer. The sequence is that of Chitin synthase 2 (CHS2) from Xylohypha bantiana.